Consider the following 352-residue polypeptide: Putative [LysW]-L-2-aminoadipate/[LysW]-L-glutamate phosphate reductase (352 aa).

NADP(+) is bound by residues 10–13 (SGFT) and 34–36 (SRK). The active site involves cysteine 151. Residue asparagine 319 coordinates NADP(+).

Belongs to the NAGSA dehydrogenase family. Type 1 subfamily. LysY sub-subfamily.

It localises to the cytoplasm. The enzyme catalyses [amino-group carrier protein]-C-terminal-N-(1-carboxy-5-oxopentan-1-yl)-L-glutamine + phosphate + NADP(+) = [amino-group carrier protein]-C-terminal-N-(1-carboxy-5-phosphooxy-5-oxopentan-1-yl)-L-glutamine + NADPH + H(+). It carries out the reaction [amino-group carrier protein]-C-terminal-gamma-(L-glutamyl-5-semialdehyde)-L-glutamate + phosphate + NADP(+) = [amino-group carrier protein]-C-terminal-gamma-(5-phospho-L-glutamyl)-L-glutamate + NADPH + H(+). It participates in amino-acid biosynthesis; L-lysine biosynthesis via AAA pathway; L-lysine from L-alpha-aminoadipate (Thermus route): step 3/5. It functions in the pathway amino-acid biosynthesis; L-arginine biosynthesis. Its function is as follows. Involved in both the arginine and lysine biosynthetic pathways. The sequence is that of Putative [LysW]-L-2-aminoadipate/[LysW]-L-glutamate phosphate reductase from Pyrobaculum neutrophilum (strain DSM 2338 / JCM 9278 / NBRC 100436 / V24Sta) (Thermoproteus neutrophilus).